A 161-amino-acid polypeptide reads, in one-letter code: MQDAITSVINSSDVQGKYLDRSAIQKLKAYFATGELRVRAATTISANAANIVKEAVAKSLLYSDITRPGGNMYTTRRYAACIRDLDYYLRYATYAMLAGDPSILDERVLNGLKETYNSLGVPIGATVQAIQAMKEVTAGLVGADAGKEMGIYFDYICSGLS.

N4-methylasparagine is present on Asn-71. Residue Cys-81 participates in (2R,3E)-phycocyanobilin binding.

Belongs to the phycobiliprotein family. As to quaternary structure, heterodimer of an alpha and a beta chain. In terms of processing, contains one covalently linked phycocyanobilin chromophore.

It localises to the cellular thylakoid membrane. In terms of biological role, light-harvesting photosynthetic bile pigment-protein from the phycobiliprotein complex. Allophycocyanin has a maximum absorption at approximately 650 nanometers. The chain is Allophycocyanin beta chain (apcB) from Arthrospira platensis (Spirulina platensis).